A 196-amino-acid polypeptide reads, in one-letter code: Glycerol-3-phosphate acyltransferase (196 aa).

Transmembrane regions (helical) follow at residues 4 to 24, 56 to 76, 80 to 100, 114 to 134, and 155 to 175; these read LTLT…AILV, ATVL…AYFL, SLYL…PIFF, TLLP…VLVV, and VYFL…LILF.

The protein belongs to the PlsY family. In terms of assembly, probably interacts with PlsX.

The protein resides in the cell inner membrane. The enzyme catalyses an acyl phosphate + sn-glycerol 3-phosphate = a 1-acyl-sn-glycero-3-phosphate + phosphate. It participates in lipid metabolism; phospholipid metabolism. Catalyzes the transfer of an acyl group from acyl-phosphate (acyl-PO(4)) to glycerol-3-phosphate (G3P) to form lysophosphatidic acid (LPA). This enzyme utilizes acyl-phosphate as fatty acyl donor, but not acyl-CoA or acyl-ACP. In Colwellia psychrerythraea (strain 34H / ATCC BAA-681) (Vibrio psychroerythus), this protein is Glycerol-3-phosphate acyltransferase.